A 1097-amino-acid chain; its full sequence is MSSSAIQVAKTATFLPDLVEVQRASFKWFLDKGLIEELESFSPITDYTGKLELHFIGSEYRLKRPRHDVEEAKRRDATFASQMYVTCRLVNKETGEIKEQEVFIGELPLMTERGTFIINGAERVIVNQIVRSPGVYFKDEMDKNGRRTYNASVIPNRGAWLKFETDKNDLLHVRVDKTRKINAHVLMRAMGLSDNDVLDKLRHPEFYKKSIDAANDEGISSEDQALLELYKKLRPGEPPSVSGGQQLLQTRFFDAKRYDLGRVGRYKINKKLRLTIPDTVRTLTHEDVLSTLDYLINLELDVGGASLDDIDHLGNRRVRSVGELLQNQVRVGLNRLERIIKERMTVGETDSLTPAQLVNPKPLVAAIKEFFGSSQLSQFMDQTNPLAELTHKRRISALGPGGLTRERAGFAVRDIHPSHYGRLCPIETPEGPNAGLINSLATHARVNEYGFIETPFWKVENGVVIKSGDPIYLSADREDEVRVAPGDVATEDNGEIKADLIPVRYRQDFEKVPPEQVDYVALSPVQVISVATSLIPFLEHDDANRALMGSNMQRQAVPLLRPERALVGTGLETQVARDSGMVPISRVNGTVVYVDANAIVVLDEDGQEHTHFLQKYQRSNQDTCLNQRPIVHQGDPVIVGQVLADGSACEGGEIALGQNVLIAYMPWEGYNYEDALLVSERLVTDDLYTSVHIEKYEIEARQTKLGPEEITREIPNVAEESLGNLDEMGIIRVGAFVESGDILVGKVTPKGESDQPPEEKLLRAIFGEKARDVRDNSLRVPGTERGRVVDVRIYTREQGDELPPGANMVVRVYVAQRRKIQVGDKMAGRHGNKGIISRILPREDMPYLPDGTPVDIVLNPLGVPSRMNVGQVFELLMGWAASNLDCRVKIIPFDEMHGAEKSQQTVTTFLTEAAKLSGKDWVYNPENPGKLVLRDGRTGLPFDQPVAVGYSHFLKLVHLVDDKIHARSTGPYSLVTQQPLGGKAQQGGQRLGEMEVWALEAYGAAYTLQELLTVKSDDMQGRNEALNAIVKGKPIPRPGTPESFKVLMRELQSLGLDIAVYTEEGKEVDLMQDVNPRRSTPSRPTYESLGVADYDED.

The interval 1072–1097 (QDVNPRRSTPSRPTYESLGVADYDED) is disordered.

It belongs to the RNA polymerase beta chain family. In cyanobacteria the RNAP catalytic core is composed of 2 alpha, 1 beta, 1 beta', 1 gamma and 1 omega subunit. When a sigma factor is associated with the core the holoenzyme is formed, which can initiate transcription.

The enzyme catalyses RNA(n) + a ribonucleoside 5'-triphosphate = RNA(n+1) + diphosphate. DNA-dependent RNA polymerase catalyzes the transcription of DNA into RNA using the four ribonucleoside triphosphates as substrates. This is DNA-directed RNA polymerase subunit beta from Synechococcus sp. (strain CC9902).